The following is a 542-amino-acid chain: TNF receptor-associated factor 6 (542 aa).

Residues 1 to 374 are interaction with TAX1BP1; the sequence is MSLLHCENSC…EAQQCNGIYI (374 aa). An RING-type; degenerate zinc finger spans residues 71-110; that stretch reads CPICLMALREAVQTPCGHRFCKACIIKSIRDAGHKCPVDN. Lysine 125 is covalently cross-linked (Glycyl lysine isopeptide (Lys-Gly) (interchain with G-Cter in SUMO); alternate). Lysine 125 participates in a covalent cross-link: Glycyl lysine isopeptide (Lys-Gly) (interchain with G-Cter in ubiquitin); alternate. Lysine 143 is covalently cross-linked (Glycyl lysine isopeptide (Lys-Gly) (interchain with G-Cter in SUMO)). TRAF-type zinc fingers lie at residues 151–203 and 204–260; these read EHQA…EDKE and IHEQ…NHLA. Positions 310–368 form a coiled coil; sequence SEVHNFQETIQQLEGRLVRQDHQIRELTAKMETQSMYVNELKRTIRTLEDKVAEIEAQQ. A Glycyl lysine isopeptide (Lys-Gly) (interchain with G-Cter in ubiquitin) cross-link involves residue lysine 339. The MATH domain occupies 370 to 519; sequence NGIYIWKIGN…DDTLLVRCEV (150 aa). The segment at 375 to 542 is interaction with TANK; that stretch reads WKIGNFGMHL…FQPRSTDSGI (168 aa). Lysine 473 participates in a covalent cross-link: Glycyl lysine isopeptide (Lys-Gly) (interchain with G-Cter in SUMO).

This sequence belongs to the TNF receptor-associated factor family. A subfamily. Homotrimer. Homooligomer. N-terminal region is dimeric while C-terminal region is trimeric; maybe providing a mode of oligomerization. Upon IL1B treatment, forms a complex with PELI1, IRAK1, IRAK4 and MYD88; this complex recruits MAP3K7/TAK1, TAB1 and TAB2 to mediate NF-kappa-B activation. Direct binding of SMAD6 to PELI1 prevents the complex formation and hence negatively regulates IL1R-TLR signaling and eventually NF-kappa-B-mediated gene expression. Binds to TNFRSF5/CD40 and TNFRSF11A/RANK. Associates with NGFR, TNFRSF17, IRAK2, IRAK3, RIPK2, MAP3K1, MAP3K5, MAP3K14, CSK, TRAF, TRAF-interacting protein TRIP and TNF receptor associated protein TDP2. Interacts with IL17R. Interacts with SQSTM1 bridging NTRK1 and NGFR. Forms a ternary complex with SQSTM1 and PRKCZ. Interacts with PELI2 and PELI3. Binds UBE2V1. Interacts with TAX1BP1; this interaction mediates deubiquitination of TRAF6 and inhibition of NF-kappa-B activation. Interacts with ZNF675. Interacts with ARRB1 and ARRB2. Interacts with MAP3K7 and TAB1/MAP3K7IP1; during IL-1 signaling. Interacts with UBE2N. Interacts with TGFBR1, HDAC1 and RANGAP1. Interacts with AKT1, AKT2 and AKT3. Interacts (via TRAF domains) with NUMBL (via C-terminal). Interacts with RBCK1. Interacts with LIMD1 (via LIM domains). Interacts with RSAD2/viperin. Interacts (via C-terminus) with EIF2AK2/PKR (via the kinase catalytic domain). Interacts with ZFAND5. Interacts with IL1RL1. Interacts with TRAFD1. Interacts with AJUBA. Interacts with MAVS/IPS1. Interacts (via TRAF domains) with DYNC2I2 (via WD domains). Interacts with IFIT3 (via N-terminus). Interacts with TICAM2. Interacts with CARD14. Interacts with CD40 and MAP3K8; the interaction is required for ERK activation. Interacts with TICAM1 and this interaction is enhanced in the presence of WDFY1. Interacts with TANK; this interaction increases in response to DNA damage. Interacts with USP10; this interaction increases in response to DNA damage. Interacts with ZC3H12A; this interaction increases in response to DNA damage and is stimulated by TANK. Interacts with WDFY3. Interacts with TRIM13. Interacts with GPS2. Interacts (via C-terminus) with SASH1. Interacts with LRRC19. Interacts with IL17RA and TRAF3IP2. Interacts with TOMM70. Interacts with AMBRA1; interaction is required to mediate 'Lys-63'-linked ubiquitination of ULK1. Interacts with CRBN; this interaction inhibits TLR4-mediated signaling by preventing TRAF6-mediated ubiquitination of ECSIT. Sumoylated on Lys-125, Lys-143 and Lys-473 with SUMO1. Post-translationally, polyubiquitinated on Lys-125 by TRAF3IP2; after cell stimulation with IL17A. Polyubiquitinated on Lys-125; after cell stimulation with IL1B or TGFB. This ligand-induced cell stimulation leads to dimerization/oligomerization of TRAF6 molecules, followed by auto-ubiquitination which involves UBE2N and UBE2V1 and leads to TRAF6 activation. This 'Lys-63' site-specific poly-ubiquitination appears to be associated with the activation of signaling molecules. Endogenous autoubiquitination occurs only for the cytoplasmic form. Deubiquitinated by USP10 in a TANK-dependent manner, leading to the negative regulation of NF-kappa-B signaling upon DNA damage. LRRC19 induces 'Lys-63' ubiquitination. Ubiquitinated at Lys-339 by the SCF(FBXL2) complex, leading to its degradation by the proteasome.

The protein resides in the cytoplasm. It localises to the cell cortex. It is found in the nucleus. Its subcellular location is the lipid droplet. It carries out the reaction S-ubiquitinyl-[E2 ubiquitin-conjugating enzyme]-L-cysteine + [acceptor protein]-L-lysine = [E2 ubiquitin-conjugating enzyme]-L-cysteine + N(6)-ubiquitinyl-[acceptor protein]-L-lysine.. The protein operates within protein modification; protein ubiquitination. Its function is as follows. E3 ubiquitin ligase that, together with UBE2N and UBE2V1, mediates the synthesis of 'Lys-63'-linked-polyubiquitin chains conjugated to proteins, such as ECSIT, IKBKG, IRAK1, AKT1 and AKT2. Also mediates ubiquitination of free/unanchored polyubiquitin chain that leads to MAP3K7 activation. Leads to the activation of NF-kappa-B and JUN. Seems to also play a role in dendritic cells (DCs) maturation and/or activation. Represses c-Myb-mediated transactivation, in B-lymphocytes. Adapter protein that seems to play a role in signal transduction initiated via TNF receptor, IL-1 receptor and IL-17 receptor. Regulates osteoclast differentiation by mediating the activation of adapter protein complex 1 (AP-1) and NF-kappa-B, in response to RANK-L stimulation. Together with MAP3K8, mediates CD40 signals that activate ERK in B-cells and macrophages, and thus may play a role in the regulation of immunoglobulin production. Acts as a regulator of the JNK and NF-kappa-B signaling pathways by initiating assembly of heterotypic 'Lys-63'-/'Lys-48'-linked branched ubiquitin chains that are then recognized by TAB2: TRAF6 catalyzes initial 'Lys-63'-linked-polyubiquitin chains that are then branched via 'Lys-48'-linked polyubiquitin by HUWE1. 'Lys-63'-/'Lys-48'-linked branched ubiquitin chains protect 'Lys-63'-linkages from CYLD deubiquitination. Also participates in the TCR signaling by ubiquitinating LAT. This is TNF receptor-associated factor 6 (TRAF6) from Bos taurus (Bovine).